A 105-amino-acid polypeptide reads, in one-letter code: Antitoxin HigA-1 (105 aa).

One can recognise an HTH cro/C1-type domain in the interval 15–69 (LKVEFLEPMGITSKALAEAMGVHRNTVSNLINGGVLTAPVAIKLAAALGNTPEFW). Positions 27 to 46 (SKALAEAMGVHRNTVSNLIN) form a DNA-binding region, H-T-H motif.

Antitoxin component of a type II toxin-antitoxin (TA) system that counteracts the effect of the HigB-1 toxin. Binds to its own promoter and regulates transcription of the higB-1/higA-1 operon. This Vibrio cholerae serotype O1 (strain ATCC 39315 / El Tor Inaba N16961) protein is Antitoxin HigA-1 (higA-1).